We begin with the raw amino-acid sequence, 521 residues long: Maturase K (521 aa).

Belongs to the intron maturase 2 family. MatK subfamily.

It is found in the plastid. Its subcellular location is the chloroplast. Its function is as follows. Usually encoded in the trnK tRNA gene intron. Probably assists in splicing its own and other chloroplast group II introns. This is Maturase K from Trillium erectum (Beth root).